A 387-amino-acid chain; its full sequence is EARP-interacting protein homolog (387 aa).

4 WD repeats span residues threonine 132 to valine 172, lysine 182 to cysteine 222, alanine 226 to lysine 266, and glutamate 270 to phenylalanine 310. Positions glycine 311 to isoleucine 339 are disordered. The span at aspartate 315–proline 326 shows a compositional bias: acidic residues. One copy of the WD 5 repeat lies at glutamate 345–isoleucine 385.

The protein belongs to the WD repeat EIPR1 family.

Its subcellular location is the golgi apparatus. It is found in the trans-Golgi network. May act as a component of endosomal retrieval machinery that is involved in protein transport from early endosomes to either recycling endosomes or the trans-Golgi network. The sequence is that of EARP-interacting protein homolog from Xenopus laevis (African clawed frog).